Consider the following 29-residue polypeptide: Cytochrome b6-f complex subunit 8 (29 aa).

The helical transmembrane segment at 3-23 threads the bilayer; it reads IVSFAWAALMVVFTFSLSLVV.

It belongs to the PetN family. The 4 large subunits of the cytochrome b6-f complex are cytochrome b6, subunit IV (17 kDa polypeptide, PetD), cytochrome f and the Rieske protein, while the 4 small subunits are PetG, PetL, PetM and PetN. The complex functions as a dimer.

It is found in the plastid. Its subcellular location is the chloroplast thylakoid membrane. Functionally, component of the cytochrome b6-f complex, which mediates electron transfer between photosystem II (PSII) and photosystem I (PSI), cyclic electron flow around PSI, and state transitions. The sequence is that of Cytochrome b6-f complex subunit 8 from Phalaenopsis aphrodite subsp. formosana (Moth orchid).